A 184-amino-acid polypeptide reads, in one-letter code: Signal peptidase I S (184 aa).

Residues Met-1 to Ala-18 lie on the Cytoplasmic side of the membrane. The helical transmembrane segment at Ile-19 to Val-39 threads the bilayer. Topologically, residues Asp-40 to Asn-184 are extracellular. Catalysis depends on residues Ser-43 and Lys-83.

Belongs to the peptidase S26 family.

The protein resides in the cell membrane. The catalysed reaction is Cleavage of hydrophobic, N-terminal signal or leader sequences from secreted and periplasmic proteins.. In terms of biological role, not essential for cell viability, but required for efficient secretion of many proteins. The chain is Signal peptidase I S (sipS) from Bacillus subtilis (strain 168).